Consider the following 359-residue polypeptide: 3-dehydroquinate synthase (359 aa).

The protein belongs to the archaeal-type DHQ synthase family.

The catalysed reaction is 2-amino-2,3,7-trideoxy-D-lyxo-hept-6-ulosonate + NAD(+) + H2O = 3-dehydroquinate + NH4(+) + NADH + H(+). Functionally, catalyzes the oxidative deamination and cyclization of 2-amino-3,7-dideoxy-D-threo-hept-6-ulosonic acid (ADH) to yield 3-dehydroquinate (DHQ), which is fed into the canonical shikimic pathway of aromatic amino acid biosynthesis. The protein is 3-dehydroquinate synthase of Methanosphaera stadtmanae (strain ATCC 43021 / DSM 3091 / JCM 11832 / MCB-3).